Here is a 658-residue protein sequence, read N- to C-terminus: Ubiquilin-3 (658 aa).

Residues 22 to 96 (IRVTVKTPKD…VHLVIKMQRR (75 aa)) form the Ubiquitin-like domain. One can recognise an STI1 domain in the interval 194–233 (NPHMQHLIQQNPEIGHILNNPEIMRQTMEFLRNPSMMQEM). The span at 280 to 291 (TATTASTTTTSS) shows a compositional bias: low complexity. 2 disordered regions span residues 280–336 (TATT…RNRL) and 362–478 (YLQG…PESP). Residues 312-323 (VSGGRQGRGGRQ) show a composition bias toward gly residues. Polar residues-rich tracts occupy residues 362 to 379 (YLQG…SPLS), 389 to 400 (SSPKSGSGQSLP), and 438 to 469 (TGPS…SLMS). The UBA domain occupies 614–658 (QLEAHFRVQLEQLRAMGFLNLEANLQALIATEGDVDAAVEKLRKS).

Testis-specific (at protein level).

The protein is Ubiquilin-3 (Ubqln3) of Mus musculus (Mouse).